Reading from the N-terminus, the 715-residue chain is DNA mismatch repair protein MLH3 (715 aa).

Belongs to the DNA mismatch repair MutL/HexB family. As to quaternary structure, heterodimer of MLH1 and MLH3, called MutLbeta, which is involved in correction of a specific subset of IDLs when associated with MutSbeta. Forms a ternary complex with a SGS1-TOP3 heterodimer during meiosis.

It localises to the nucleus. Involved in DNA mismatch repair (MMR), correcting insertion-deletion loops (IDLs) resulting from DNA replication, DNA damage or from recombination events between non-identical sequences during meiosis. Component of the MutLbeta heterodimer, which probably forms a ternary complex with the MutSbeta heterodimer that initially recognizes the DNA mismatches. This complex is thought to be responsible for directing the downstream MMR events, including strand discrimination, excision, and resynthesis. Plays a major role in promoting meiotic crossing-over and is involved in maintaining the genetic stability of simple sequence repeats by correction of frameshift intermediates. The chain is DNA mismatch repair protein MLH3 (MLH3) from Saccharomyces cerevisiae (strain ATCC 204508 / S288c) (Baker's yeast).